Here is a 507-residue protein sequence, read N- to C-terminus: Transcription factor NIGTH1 (507 aa).

Disordered regions lie at residues 139–172 and 238–268; these read ASAA…TALD and SREA…RKAR. Positions 152–161 are enriched in basic and acidic residues; the sequence is PKEHSEHHPL. The region spanning 263 to 323 is the HTH myb-type domain; the sequence is PHRKARRCWS…HLQKYRLHTR (61 aa). The H-T-H motif DNA-binding region spans 294 to 319; the sequence is PKQIRELMKVDGLTNDEVKSHLQKYR. The interval 402 to 507 is disordered; sequence AVAPPPPLPP…TTTSAGAINY (106 aa). Positions 412–433 are enriched in low complexity; it reads QQQLAPPYSAKSSASARLGSPD. The span at 437–446 shows a compositional bias: gly residues; sequence RGSGGGGGAA. A compositionally biased stretch (acidic residues) spans 456 to 476; that stretch reads ESIEEEGEGEEREDDDDDDEM.

In terms of assembly, interacts with ACA5.

Its subcellular location is the nucleus. Its function is as follows. Probable transcription factor that may play a role in regulatory networks controlling development and metabolism. The protein is Transcription factor NIGTH1 of Oryza sativa subsp. japonica (Rice).